The chain runs to 105 residues: Integration host factor subunit beta (105 aa).

The protein belongs to the bacterial histone-like protein family. As to quaternary structure, heterodimer of an alpha and a beta chain.

This protein is one of the two subunits of integration host factor, a specific DNA-binding protein that functions in genetic recombination as well as in transcriptional and translational control. The chain is Integration host factor subunit beta from Bradyrhizobium sp. (strain ORS 278).